Consider the following 267-residue polypeptide: uncharacterized protein (267 aa).

Ser210 and Ser224 each carry phosphoserine.

As to expression, testis. Down-regulated in men with spermatocyte arrest.

Its function is as follows. Essential for normal spermatogenesis and male fertility. This is an uncharacterized protein from Homo sapiens (Human).